A 202-amino-acid polypeptide reads, in one-letter code: Matrix protein (202 aa).

Residues 13–32 (DEEIPKPGTPSAPPDDDDLW) form a disordered region. A PPXY motif motif is present at residues 35–38 (PPEY).

It belongs to the lyssavirus matrix protein family. As to quaternary structure, homomultimer. Interacts with nucleoprotein and with the cytoplasmic domain of glycoprotein.

The protein localises to the virion membrane. It localises to the host endomembrane system. Functionally, plays a major role in assembly and budding of virion. Completely covers the ribonucleoprotein coil and keep it in condensed bullet-shaped form. Inhibits viral transcription and stimulates replication. Plays a major role in early induction of TRAIL-mediated apoptosis in infected neurons. The sequence is that of Matrix protein (M) from Lagos bat virus (LBV).